The primary structure comprises 1929 residues: Intraflagellar transport protein 140 (1929 aa).

WD repeat units follow at residues 76-116 and 119-158; these read QVQV…PSYK and LHQE…YSFE. The tract at residues 774-795 is disordered; sequence LSTPDTGSPAVEAEESPQRQTR. LRR repeat units follow at residues 957-980, 1019-1044, and 1510-1532; these read STSL…TFTK, ISLL…SLAE, and AQSL…LADI.

It localises to the cell projection. It is found in the cilium. The protein localises to the flagellum. The protein resides in the cytoplasm. Its subcellular location is the cytoskeleton. It localises to the flagellum axoneme. It is found in the flagellum basal body. Component of the intraflagellar transport complex A (IFT-A) involved in flagellar assembly. This Giardia intestinalis (strain ATCC 50803 / WB clone C6) (Giardia lamblia) protein is Intraflagellar transport protein 140.